The chain runs to 282 residues: MNMAESHLDPSKLATGPAGAGAATGQRPLAPLNAKIEVKNLNFFYNQFHALKNINLSIPEGKVTAFIGPSGCGKSTLLRTFNKMYALYPEQRAEGEIVMDGENLLQSKLDISLLRARIGMVFQKPTPFPMSIYDNIAFGVKMFERLTRSEMDDRVEWALTKAALWNEVKDKLSQSGYGLSGGQQQRLCIARGIAIRPEVLLLDEPCSALDPISTGRIEELIAELKSDYTVVIVTHNMQQAARCSDYTAYMYLGELIEFGETEKIFIKPARKETEDYITGRFG.

Residues 1 to 10 (MNMAESHLDP) show a composition bias toward basic and acidic residues. A disordered region spans residues 1-24 (MNMAESHLDPSKLATGPAGAGAAT). Positions 14–24 (ATGPAGAGAAT) are enriched in low complexity. The 242-residue stretch at 36 to 277 (IEVKNLNFFY…PARKETEDYI (242 aa)) folds into the ABC transporter domain. 68 to 75 (GPSGCGKS) contacts ATP.

The protein belongs to the ABC transporter superfamily. Phosphate importer (TC 3.A.1.7) family. The complex is composed of two ATP-binding proteins (PstB), two transmembrane proteins (PstC and PstA) and a solute-binding protein (PstS).

The protein localises to the cell inner membrane. It carries out the reaction phosphate(out) + ATP + H2O = ADP + 2 phosphate(in) + H(+). Functionally, part of the ABC transporter complex PstSACB involved in phosphate import. Responsible for energy coupling to the transport system. In Burkholderia thailandensis (strain ATCC 700388 / DSM 13276 / CCUG 48851 / CIP 106301 / E264), this protein is Phosphate import ATP-binding protein PstB.